Reading from the N-terminus, the 171-residue chain is Large ribosomal subunit protein bL9 (171 aa).

It belongs to the bacterial ribosomal protein bL9 family.

In terms of biological role, binds to the 23S rRNA. This is Large ribosomal subunit protein bL9 from Rickettsia akari (strain Hartford).